Here is a 562-residue protein sequence, read N- to C-terminus: NAD-dependent malic enzyme (562 aa).

Residue tyrosine 101 is the Proton donor of the active site. Arginine 154 contributes to the NAD(+) binding site. Lysine 172 functions as the Proton acceptor in the catalytic mechanism. Positions 243, 244, and 267 each coordinate a divalent metal cation. NAD(+)-binding residues include aspartate 267 and asparagine 415.

The protein belongs to the malic enzymes family. In terms of assembly, homotetramer. Mg(2+) is required as a cofactor. Mn(2+) serves as cofactor.

The enzyme catalyses (S)-malate + NAD(+) = pyruvate + CO2 + NADH. It catalyses the reaction oxaloacetate + H(+) = pyruvate + CO2. This chain is NAD-dependent malic enzyme, found in Shewanella sediminis (strain HAW-EB3).